The primary structure comprises 186 residues: ATP synthase subunit delta (186 aa).

It belongs to the ATPase delta chain family. As to quaternary structure, F-type ATPases have 2 components, F(1) - the catalytic core - and F(0) - the membrane proton channel. F(1) has five subunits: alpha(3), beta(3), gamma(1), delta(1), epsilon(1). F(0) has three main subunits: a(1), b(2) and c(10-14). The alpha and beta chains form an alternating ring which encloses part of the gamma chain. F(1) is attached to F(0) by a central stalk formed by the gamma and epsilon chains, while a peripheral stalk is formed by the delta and b chains.

It localises to the cell inner membrane. F(1)F(0) ATP synthase produces ATP from ADP in the presence of a proton or sodium gradient. F-type ATPases consist of two structural domains, F(1) containing the extramembraneous catalytic core and F(0) containing the membrane proton channel, linked together by a central stalk and a peripheral stalk. During catalysis, ATP synthesis in the catalytic domain of F(1) is coupled via a rotary mechanism of the central stalk subunits to proton translocation. In terms of biological role, this protein is part of the stalk that links CF(0) to CF(1). It either transmits conformational changes from CF(0) to CF(1) or is implicated in proton conduction. This is ATP synthase subunit delta from Brucella anthropi (strain ATCC 49188 / DSM 6882 / CCUG 24695 / JCM 21032 / LMG 3331 / NBRC 15819 / NCTC 12168 / Alc 37) (Ochrobactrum anthropi).